The sequence spans 46 residues: Defensin-1 (46 aa).

Cystine bridges form between Cys3–Cys46, Cys14–Cys35, Cys20–Cys40, and Cys24–Cys42.

This sequence belongs to the DEFL family. In terms of tissue distribution, epidermis and vascular bundles of pods, stems, roots, leaves and wet or dry seeds.

In terms of biological role, possesses antifungal activity sensitive to inorganic cations. This Pisum sativum (Garden pea) protein is Defensin-1.